Here is a 372-residue protein sequence, read N- to C-terminus: 4-hydroxy-3-methylbut-2-en-1-yl diphosphate synthase (flavodoxin) (372 aa).

[4Fe-4S] cluster is bound by residues Cys-270, Cys-273, Cys-305, and Glu-312.

The protein belongs to the IspG family. The cofactor is [4Fe-4S] cluster.

It carries out the reaction (2E)-4-hydroxy-3-methylbut-2-enyl diphosphate + oxidized [flavodoxin] + H2O + 2 H(+) = 2-C-methyl-D-erythritol 2,4-cyclic diphosphate + reduced [flavodoxin]. It functions in the pathway isoprenoid biosynthesis; isopentenyl diphosphate biosynthesis via DXP pathway; isopentenyl diphosphate from 1-deoxy-D-xylulose 5-phosphate: step 5/6. Converts 2C-methyl-D-erythritol 2,4-cyclodiphosphate (ME-2,4cPP) into 1-hydroxy-2-methyl-2-(E)-butenyl 4-diphosphate. This is 4-hydroxy-3-methylbut-2-en-1-yl diphosphate synthase (flavodoxin) from Escherichia coli O139:H28 (strain E24377A / ETEC).